A 117-amino-acid chain; its full sequence is UPF0342 protein LEUM_1212 (117 aa).

Belongs to the UPF0342 family.

This is UPF0342 protein LEUM_1212 from Leuconostoc mesenteroides subsp. mesenteroides (strain ATCC 8293 / DSM 20343 / BCRC 11652 / CCM 1803 / JCM 6124 / NCDO 523 / NBRC 100496 / NCIMB 8023 / NCTC 12954 / NRRL B-1118 / 37Y).